The chain runs to 352 residues: MSNSAVSSADSIKLTEYSHGAGCGCKISPKVLTTILASQLPVFTDPNLLVGNQSRDDAAVYKLNDEIGIISTTDFFMPIVDDPFTFGRIAATNAISDIYAMGGTPMMAIAILGWPVNKLPAEIAQQVVDGGRQACMEAGIMLAGGHSIDAPEPIFGLAVTGQIALTDLKQNDTAKADDRLYLTKPIGIGILTTAQKQKKLKDEDSQIAVNAMCQLNSIGAKIAKIKGVNALTDVTGFGLAGHLLEVCQGAKLTAKLNLDAVPLLPRALDYLAQGCIPGGTHRNYDSYGEHLPTLTDHQKAILCDPQTSGGLLVAVSSEAEAELVALLNAHQIEPICIGSLETPTSTANVVLC.

Residue Cys-23 is part of the active site. ATP contacts are provided by residues Lys-26 and 54 to 56 (SRD). Asp-57 contributes to the Mg(2+) binding site. ATP is bound by residues Asp-74, Asp-97, and 145 to 147 (GHS). Asp-97 contacts Mg(2+). Asp-233 is a binding site for Mg(2+).

Belongs to the selenophosphate synthase 1 family. Class I subfamily. Homodimer. It depends on Mg(2+) as a cofactor.

The enzyme catalyses hydrogenselenide + ATP + H2O = selenophosphate + AMP + phosphate + 2 H(+). Synthesizes selenophosphate from selenide and ATP. The protein is Selenide, water dikinase of Shewanella sp. (strain ANA-3).